A 134-amino-acid polypeptide reads, in one-letter code: Translation initiation factor 5A (134 aa).

Lys-36 carries the hypusine modification.

Belongs to the eIF-5A family.

It is found in the cytoplasm. Its function is as follows. Functions by promoting the formation of the first peptide bond. The protein is Translation initiation factor 5A (eIF5A) of Korarchaeum cryptofilum (strain OPF8).